The chain runs to 580 residues: mRNA-decapping enzyme 1A (580 aa).

A Phosphoserine modification is found at Ser62. The segment covering 132–141 (RSQQAARDKQ) has biased composition (basic and acidic residues). 3 disordered regions span residues 132–154 (RSQQ…DHRP), 172–209 (QMGD…QDKS), and 245–276 (LPGD…NMGI). A phosphoserine mark is found at Ser142, Ser179, and Ser180. A compositionally biased stretch (polar residues) spans 173-196 (MGDSNISSPGLQPSTQISNLGSTE). Residues 253–264 (EPSSFLPFSFEP) are compositionally biased toward low complexity. 2 positions are modified to phosphoserine: Ser319 and Ser334. Polar residues predominate over residues 343-359 (QAVKTTPRQRSPLSSQP). Residues 343-371 (QAVKTTPRQRSPLSSQPVPELSQASLAAS) form a disordered region. Position 348 is a phosphothreonine (Thr348). The residue at position 353 (Ser353) is a Phosphoserine. At Arg376 the chain carries Asymmetric dimethylarginine. Residue Thr401 is modified to Phosphothreonine. Phosphoserine is present on residues Ser422, Ser520, Ser521, and Ser523. The disordered stretch occupies residues 510–533 (TRSSDLERKASSPSPLTVGTSENQ). Positions 520–531 (SSPSPLTVGTSE) are enriched in polar residues. A phosphothreonine mark is found at Thr526 and Thr529.

Belongs to the DCP1 family. Forms a complex with EDC3, DCP2, DDX6 and EDC4/HEDLS, within this complex directly interacts with EDC3. Part of a cytoplasmic complex containing proteins involved in mRNA decay, including XRN1 and LSM1. Interacts with DCP1B. Interacts with DCP2. Interacts with DDX17 in an RNA-independent manner. Interacts with PNRC2. Interacts with SMAD4. Interacts with UPF1. Interacts with ZC3HAV1. Interacts with ZFP36L1. Interacts with NBDY. Interacts with DHX34; the interaction is RNA-independent. In terms of processing, (Microbial infection) Cleaved by porcine reproductive and respiratory syndrome virus serine protease nsp4 after Glu-238. The cleavage inhibits DCP1A function.

The protein localises to the cytoplasm. It is found in the P-body. The protein resides in the nucleus. It carries out the reaction a 5'-end (N(7)-methyl 5'-triphosphoguanosine)-ribonucleoside in mRNA + H2O = N(7)-methyl-GDP + a 5'-end phospho-ribonucleoside in mRNA + 2 H(+). In terms of biological role, necessary for the degradation of mRNAs, both in normal mRNA turnover and in nonsense-mediated mRNA decay. Removes the 7-methyl guanine cap structure from mRNA molecules, yielding a 5'-phosphorylated mRNA fragment and 7m-GDP. Contributes to the transactivation of target genes after stimulation by TGFB1. Essential for embryonic development. The protein is mRNA-decapping enzyme 1A (DCP1A) of Sus scrofa (Pig).